Reading from the N-terminus, the 555-residue chain is Exodeoxyribonuclease 7 large subunit (555 aa).

It belongs to the XseA family. As to quaternary structure, heterooligomer composed of large and small subunits.

It is found in the cytoplasm. The enzyme catalyses Exonucleolytic cleavage in either 5'- to 3'- or 3'- to 5'-direction to yield nucleoside 5'-phosphates.. In terms of biological role, bidirectionally degrades single-stranded DNA into large acid-insoluble oligonucleotides, which are then degraded further into small acid-soluble oligonucleotides. This Chlamydia felis (strain Fe/C-56) (Chlamydophila felis) protein is Exodeoxyribonuclease 7 large subunit.